A 494-amino-acid polypeptide reads, in one-letter code: MKYSDLRDFISQLQQMGELKRINMPVSPYLEMTEICDRTLRAEGPALLFENPTGHTIPVLGNLFGTPQRVALGMGATDVSELRKIGHVLAMLKEPEPPKGFKDMLGLGSLVKSLWDMTPKERRDAPCHDIVWEGNDVDLARLPIQHCWPGDIAPLITWGLVITKGPHKKRQNLGIYRQQVIGRNKVIMRWLAQRGGALDFREHSIANRGQPYPIAVALGADPATILGAVTPVPDSLSEYQFAGLLRGSRTELVKAIGSELRVPASAEIVLEGHIYPDESHPSGYEHALEGPYGDHTGYYNEQDTFPVFTIDRITMRRDPIYHSTYTGKPPDEPAILGVALNEVFIPLLQKQFSEILDFYLPPEGCSYRMAVVQMKKAYPGHAKRVMFGVWSFLRQFMYTKFIIVVDEDVNIRDWKEVIWAITTRVDPTRDTTLVDNTPIDYLDFASPVSGLGSKMGIDATNKWPGETDREWGTTITMTPEVKKRVDQIWQELGI.

Mn(2+) is bound at residue Asn172. Residues 175–177 (IYR), 189–191 (RWL), and 194–195 (RG) each bind prenylated FMN. Glu238 is a binding site for Mn(2+). Residue Asp294 is the Proton donor of the active site.

Belongs to the UbiD family. As to quaternary structure, homohexamer. The cofactor is prenylated FMN. Mn(2+) is required as a cofactor.

The protein resides in the cell membrane. It carries out the reaction a 4-hydroxy-3-(all-trans-polyprenyl)benzoate + H(+) = a 2-(all-trans-polyprenyl)phenol + CO2. Its pathway is cofactor biosynthesis; ubiquinone biosynthesis. Its function is as follows. Catalyzes the decarboxylation of 3-octaprenyl-4-hydroxy benzoate to 2-octaprenylphenol, an intermediate step in ubiquinone biosynthesis. The polypeptide is 3-octaprenyl-4-hydroxybenzoate carboxy-lyase (Herminiimonas arsenicoxydans).